The primary structure comprises 263 residues: Phosphoinositide-3-kinase-interacting protein 1 (263 aa).

The signal sequence occupies residues 1 to 21; it reads MLLAWVQAFLVSNMLLAEAYG. Over 22–168 the chain is Extracellular; the sequence is SGGCFWDNGH…NSKEKKDLGT (147 aa). One can recognise a Kringle domain in the interval 24–101; the sequence is GCFWDNGHLY…EKRPCEDLRC (78 aa). Intrachain disulfides connect cysteine 25–cysteine 101, cysteine 46–cysteine 82, and cysteine 70–cysteine 96. Serine 39 carries an O-linked (GalNAc...) serine glycan. Asparagine 66 carries N-linked (GlcNAc...) (complex) asparagine glycosylation. The helical transmembrane segment at 169–189 threads the bilayer; sequence LGYVLGITMMVIIIAIGAGII. At 190–263 the chain is on the cytoplasmic side; sequence LGYSYKRGKD…LMGQAGTPGA (74 aa). Polar residues predominate over residues 242-251; that stretch reads QTPVDPQEGT. The tract at residues 242–263 is disordered; it reads QTPVDPQEGTTPLMGQAGTPGA.

In terms of processing, N- and O-glycosylated. O-glycosylated with core 1 or possibly core 8 glycans. N-glycan heterogeneity at Asn-66: dHex1Hex5HexNAc4 (major) and dHex1Hex6HexNAc5 (minor).

The protein resides in the cell membrane. In terms of biological role, negative regulator of hepatic phosphatidylinositol 3-kinase (PI3K) activity. The chain is Phosphoinositide-3-kinase-interacting protein 1 (PIK3IP1) from Homo sapiens (Human).